We begin with the raw amino-acid sequence, 404 residues long: Probable tRNA sulfurtransferase (404 aa).

One can recognise a THUMP domain in the interval 61–166 (EAVSERLKDV…SGYSYIMCDE (106 aa)). ATP is bound by residues 184-185 (LL), 209-210 (HF), Arg266, Gly288, and Gln297.

Belongs to the ThiI family.

The protein localises to the cytoplasm. It carries out the reaction [ThiI sulfur-carrier protein]-S-sulfanyl-L-cysteine + a uridine in tRNA + 2 reduced [2Fe-2S]-[ferredoxin] + ATP + H(+) = [ThiI sulfur-carrier protein]-L-cysteine + a 4-thiouridine in tRNA + 2 oxidized [2Fe-2S]-[ferredoxin] + AMP + diphosphate. The catalysed reaction is [ThiS sulfur-carrier protein]-C-terminal Gly-Gly-AMP + S-sulfanyl-L-cysteinyl-[cysteine desulfurase] + AH2 = [ThiS sulfur-carrier protein]-C-terminal-Gly-aminoethanethioate + L-cysteinyl-[cysteine desulfurase] + A + AMP + 2 H(+). It functions in the pathway cofactor biosynthesis; thiamine diphosphate biosynthesis. Functionally, catalyzes the ATP-dependent transfer of a sulfur to tRNA to produce 4-thiouridine in position 8 of tRNAs, which functions as a near-UV photosensor. Also catalyzes the transfer of sulfur to the sulfur carrier protein ThiS, forming ThiS-thiocarboxylate. This is a step in the synthesis of thiazole, in the thiamine biosynthesis pathway. The sulfur is donated as persulfide by IscS. The sequence is that of Probable tRNA sulfurtransferase from Bacillus cereus (strain ATCC 10987 / NRS 248).